The following is a 309-amino-acid chain: Taste receptor type 2 member 8 (309 aa).

Residues 1–7 (MFSPADN) are Extracellular-facing. The helical transmembrane segment at 8–28 (IFIILITGEFILGILGNGYIA) threads the bilayer. Residues 29–50 (LVNWIDWIKKKKISTVDYILTN) are Cytoplasmic-facing. The helical transmembrane segment at 51-71 (LVIARICLISVMVVNGIVIVL) threads the bilayer. Residues 72–82 (NPDVYTKNKQQ) lie on the Extracellular side of the membrane. A helical transmembrane segment spans residues 83–103 (IVIFTFWTFANYLNMWITTCL). The Cytoplasmic portion of the chain corresponds to 104–131 (NVFYFLKIASSSHPLFLWLKWKIDMVVH). A helical membrane pass occupies residues 132–152 (WILLGCFAISLLVSLIAAIVL). Residues 153–184 (SCDYRFHAIAKHKRNITEMFXVSKIPYFEPLT) are Extracellular-facing. N-linked (GlcNAc...) asparagine glycosylation is present at Asn-167. Residues 185-205 (LFNLFAIVPFIVSLISFFLLV) traverse the membrane as a helical segment. Topologically, residues 206 to 239 (RSLWRHTKQIKLYATGSRDPSTEVHVRAIKTMTS) are cytoplasmic. Residues 240 to 260 (FIFFFFLYFISSILMTFSYLM) form a helical membrane-spanning segment. Residues 261-266 (TKYKLA) are Extracellular-facing. A helical membrane pass occupies residues 267-287 (VEFGEIAAILYPLGHSLILIV). The Cytoplasmic portion of the chain corresponds to 288 to 309 (LNNKLRQIFVRMLTCRKIACVI).

Belongs to the G-protein coupled receptor T2R family.

Its subcellular location is the membrane. Receptor that may play a role in the perception of bitterness and is gustducin-linked. May play a role in sensing the chemical composition of the gastrointestinal content. The activity of this receptor may stimulate alpha gustducin, mediate PLC-beta-2 activation and lead to the gating of TRPM5. In Pan troglodytes (Chimpanzee), this protein is Taste receptor type 2 member 8 (TAS2R8).